The primary structure comprises 189 residues: Peptidyl-tRNA hydrolase (189 aa).

Tyr15 provides a ligand contact to tRNA. His20 acts as the Proton acceptor in catalysis. 3 residues coordinate tRNA: Phe66, Asn68, and Asn114.

The protein belongs to the PTH family. As to quaternary structure, monomer.

The protein localises to the cytoplasm. It catalyses the reaction an N-acyl-L-alpha-aminoacyl-tRNA + H2O = an N-acyl-L-amino acid + a tRNA + H(+). Its function is as follows. Hydrolyzes ribosome-free peptidyl-tRNAs (with 1 or more amino acids incorporated), which drop off the ribosome during protein synthesis, or as a result of ribosome stalling. Catalyzes the release of premature peptidyl moieties from peptidyl-tRNA molecules trapped in stalled 50S ribosomal subunits, and thus maintains levels of free tRNAs and 50S ribosomes. The sequence is that of Peptidyl-tRNA hydrolase from Streptococcus sanguinis (strain SK36).